The following is a 393-amino-acid chain: Short-chain dehydrogenase/reductase family 42E member 1 (393 aa).

Tyrosine 152 serves as the catalytic Proton acceptor. Residue lysine 156 coordinates NAD(+). Helical transmembrane passes span leucine 282–glycine 302 and glycine 371–leucine 391.

This sequence belongs to the 3-beta-HSD family.

Its subcellular location is the membrane. The polypeptide is Short-chain dehydrogenase/reductase family 42E member 1 (SDR42E1) (Homo sapiens (Human)).